Consider the following 152-residue polypeptide: Methylglyoxal synthase (152 aa).

The region spanning 6-152 (RTLATEKNIA…YEGYLKERLK (147 aa)) is the MGS-like domain. Residues histidine 19, lysine 23, 45–48 (TGTT), and 65–66 (SG) each bind substrate. Aspartate 71 functions as the Proton donor/acceptor in the catalytic mechanism. Histidine 98 contributes to the substrate binding site.

The protein belongs to the methylglyoxal synthase family.

The catalysed reaction is dihydroxyacetone phosphate = methylglyoxal + phosphate. Functionally, catalyzes the formation of methylglyoxal from dihydroxyacetone phosphate. The sequence is that of Methylglyoxal synthase from Proteus mirabilis (strain HI4320).